A 1464-amino-acid polypeptide reads, in one-letter code: Glutamate receptor ionotropic, NMDA 2A (1464 aa).

Positions M1–A22 are cleaved as a signal peptide. Topologically, residues P23–S556 are extracellular. H44 lines the Zn(2+) pocket. A glycan (N-linked (GlcNAc...) asparagine) is linked at N75. Residues C87 and C320 are joined by a disulfide bond. Zn(2+) contacts are provided by H128, E266, and D282. 4 N-linked (GlcNAc...) asparagine glycosylation sites follow: N340, N380, N443, and N444. Intrachain disulfides connect C429–C455 and C436–C456. The L-glutamate site is built by S511, T513, and R518. A glycan (N-linked (GlcNAc...) asparagine) is linked at N541. A helical transmembrane segment spans residues V557 to F576. The Cytoplasmic segment spans residues E577 to T600. A pore-forming region spans residues F599–Q620. The discontinuously helical intramembrane region spans I601–N615. Residues S616–T625 lie on the Cytoplasmic side of the membrane. A helical transmembrane segment spans residues T626 to T646. At A647–I814 the chain is on the extracellular side. N687 is a glycosylation site (N-linked (GlcNAc...) asparagine). S689, T690, and D731 together coordinate L-glutamate. Cysteines 745 and 800 form a disulfide. Residues D815–F835 traverse the membrane as a helical segment. Topologically, residues I836 to V1464 are cytoplasmic. Residues S882, S890, and S929 each carry the phosphoserine modification. Composition is skewed to polar residues over residues S1001–P1010 and Q1023–S1032. Disordered stretches follow at residues S1001–R1088 and P1148–N1180. S1025 is modified (phosphoserine). Basic and acidic residues-rich tracts occupy residues Q1033–T1043 and L1052–I1061. Phosphoserine occurs at positions 1059 and 1062. Basic and acidic residues predominate over residues C1070–K1087. Polar residues predominate over residues L1165 to N1180. A phosphoserine mark is found at S1198 and S1291. Positions K1335 to R1372 are disordered. The PDZ-binding signature appears at S1462 to V1464.

The protein belongs to the glutamate-gated ion channel (TC 1.A.10.1) family. NR2A/GRIN2A subfamily. As to quaternary structure, heterotetramer. Forms heterotetrameric channels composed of two GluN1/zeta subunits (GRIN1), and two identical GluN2/epsilon subunits (GRIN2A, GRIN2B, GRIN2C or GRIN2D) or GluN3 subunits (GRIN3A or GRIN3B) (in vitro). Can also form heterotetrameric channels that contain at least two GluN1 subunits and at least two different GluN2 subunits (or a combination of one GluN2 and one GluN3 subunits) (in vitro). In vivo, the subunit composition may depend on the expression levels of the different subunits. Found in a complex with GRIN1, GRIN3A and PPP2CB. Found in a complex with GRIN1 and GRIN3B. Interacts with AIP1. Interacts with HIP1 and NETO1. Interacts with SNX27 (via PDZ domain); the interaction is required for recycling to the plasma membrane when endocytosed and prevent degradation in lysosomes. Interacts with PDZ domains of PATJ and DLG4. Interacts with LRFN2. Interacts with RPH3A and DLG4; this ternary complex regulates NMDA receptor composition at postsynaptic membranes. Interacts with SORCS2. Interacts with ARC; preventing ARC oligomerization. Interacts (via the extreme C-terminus) with FRMPD2 (the second PDZ domain); the interaction is direct and is likely to promote NMDAR-mediated neural signal transmission. GRIN2A binds FRMPD2 with lower affinity than GRIN2B.

Its subcellular location is the cell projection. The protein localises to the dendritic spine. The protein resides in the cell membrane. It is found in the synapse. It localises to the postsynaptic cell membrane. Its subcellular location is the cytoplasmic vesicle membrane. It carries out the reaction Ca(2+)(in) = Ca(2+)(out). It catalyses the reaction Na(+)(in) = Na(+)(out). The enzyme catalyses K(+)(in) = K(+)(out). Its function is as follows. Component of N-methyl-D-aspartate (NMDA) receptors (NMDARs) that function as heterotetrameric, ligand-gated cation channels with high calcium permeability and voltage-dependent block by Mg(2+). NMDARs participate in synaptic plasticity for learning and memory formation by contributing to the slow phase of excitatory postsynaptic current, long-term synaptic potentiation, and learning. Channel activation requires binding of the neurotransmitter L-glutamate to the GluN2 subunit, glycine or D-serine binding to the GluN1 subunit, plus membrane depolarization to eliminate channel inhibition by Mg(2+). NMDARs mediate simultaneously the potasium efflux and the influx of calcium and sodium. Each GluN2 subunit confers differential attributes to channel properties, including activation, deactivation and desensitization kinetics, pH sensitivity, Ca2(+) permeability, and binding to allosteric modulators. Participates in the synaptic plasticity regulation through activation by the L-glutamate releaseed by BEST1, into the synaptic cleft, upon F2R/PAR-1 activation in astrocyte. This Pan troglodytes (Chimpanzee) protein is Glutamate receptor ionotropic, NMDA 2A.